We begin with the raw amino-acid sequence, 182 residues long: Peptidoglycan L,D-endopeptidase MepK (182 aa).

The segment at residues 1 to 30 is a signal peptide (tat-type signal); the sequence is MDKFDANRRKLLALGGVALGAAILPTPAFA. Residues His133, Asp140, and His173 each coordinate Zn(2+).

This sequence belongs to the peptidase M15 family. Zn(2+) serves as cofactor. Predicted to be exported by the Tat system. The position of the signal peptide cleavage has not been experimentally proven.

It participates in cell wall biogenesis; cell wall polysaccharide biosynthesis. In terms of biological role, l,D-endopeptidase that cleaves meso-diaminopimelic acid (mDAP)-mDAP cross-links in peptidoglycan. It works in conjunction with other elongation-specific D,D-endopeptidases to make space for efficient incorporation of nascent peptidoglycan strands into the sacculus and thus enable cell wall expansion. In Escherichia coli O157:H7, this protein is Peptidoglycan L,D-endopeptidase MepK.